The following is a 1050-amino-acid chain: Nuclear pore complex-interacting protein family member B3 (1050 aa).

Residues 63–87 (VIIAFPTSYKVVITLWIVYLWVSLL) traverse the membrane as a helical segment. Disordered stretches follow at residues 241–262 (NRMGHQPPPPTQQHSITDNSLS), 290–574 (LTPL…NIKT), and 785–1050 (ERLR…RRLS). A compositionally biased stretch (polar residues) spans 252 to 262 (QQHSITDNSLS). Over residues 349–359 (PLPPSALPSAP) the composition is skewed to pro residues. 7 stretches are compositionally biased toward basic and acidic residues: residues 406-416 (DNIKTPAERLR), 448-458 (DNIKTPAERLR), 490-500 (DNIKTPAERLR), 528-538 (DNIKTPAERLR), 820-830 (DNIKTPAERLR), 862-872 (DNIKTPAERLR), and 904-914 (DNIKTPAERLR).

This sequence belongs to the NPIP family.

The protein localises to the membrane. The sequence is that of Nuclear pore complex-interacting protein family member B3 (NPIPB3) from Homo sapiens (Human).